The primary structure comprises 375 residues: Succinyl-diaminopimelate desuccinylase (375 aa).

A Zn(2+)-binding site is contributed by H66. Residue D68 is part of the active site. Residue D99 participates in Zn(2+) binding. Residue E133 is the Proton acceptor of the active site. 3 residues coordinate Zn(2+): E134, E162, and H348.

Belongs to the peptidase M20A family. DapE subfamily. As to quaternary structure, homodimer. The cofactor is Zn(2+). It depends on Co(2+) as a cofactor.

The catalysed reaction is N-succinyl-(2S,6S)-2,6-diaminopimelate + H2O = (2S,6S)-2,6-diaminopimelate + succinate. It functions in the pathway amino-acid biosynthesis; L-lysine biosynthesis via DAP pathway; LL-2,6-diaminopimelate from (S)-tetrahydrodipicolinate (succinylase route): step 3/3. In terms of biological role, catalyzes the hydrolysis of N-succinyl-L,L-diaminopimelic acid (SDAP), forming succinate and LL-2,6-diaminopimelate (DAP), an intermediate involved in the bacterial biosynthesis of lysine and meso-diaminopimelic acid, an essential component of bacterial cell walls. The polypeptide is Succinyl-diaminopimelate desuccinylase (Escherichia coli O157:H7).